The following is a 1486-amino-acid chain: MIERGKFRSLTLINWNGFFARTFDLDELVTTLSGGNGAGKSTTMAAFVTALIPDLTLLHFRNTTEAGATSGSRDKGLHGKLKAGVCYSMLDTINSRHQRVVVGVRLQQVAGRDRKVDIKPFAIQGLPMSVQPTQLVTETLNERQARVLPLNELKDKLEAMEGVQFKQFNSITDYHSLMFDLGIIARRLRSASDRSKFYRLIEASLYGGISSAITRSLRDYLLPENSGVRKAFQDMEAALRENRMTLEAIRVTQSDRDLFKHLISEATNYVAADYMRHANERRVHLDKALEFRRELHTSRQQLAAEQYKHVDMARELAEHNGAEGDLEADYQAASDHLNLVQTALRQQEKIERYEADLDELQIRLEEQNEVVAEAIERQEENEARAEAAELEVDELKSQLADYQQALDVQQTRAIQYNQAIAALNRAKELCHLPDLTADSAAEWLETFQAKELEATEKMLSLEQKMSMAQTAHSQFEQAYQLVVAINGPLARNEAWDVARELLREGVDQRHLAEQVQPLRMRLSELEQRLREQQEAERLLADFCKRQGKNFDIDELEALHQELEARIASLSDSVSNAREERMALRQEQEQLQSRIQSLMQRAPVWLAAQNSLNQLSEQCGEEFTSSQDVTEFLQQLLEREREAIVERDEVGARKNAVDEEIERLSQPGGSEDQRLNALAERFGGVLLSEIYDDVSLEDAPYFSALYGPSRHAIVVPDLSQVTEHLEGLTDCPEDLYLIEGDPQSFDDSVFSVDELEKAVVVKIADRQWRYSRFPEVPLFGRAARESRIESLHAEREVLSERFATLSFDVQKIQRLHQAFSRFIGSHLAVAFESDPEAEIRQLNSRRVELERALSNHENDNQQQRIQFEQAKEGVTALNRILPRLNLLADDSLADRVDEIRERLDEAQEAARFVQQFGNQLAKLEPIVSVLQSDPEQFEQLKEDYAYSQQMQRDARQQAFALTEVVQRRAHFSYSDSAEMLSGNSDLNEKLRERLEQAEAERTRAREALRGHAAQLNQYNQVLASLKSSYDTKKELLNDLQRELQDIGVRADSGAEERARIRRDELHAQLSNNRSRRNQLEKALTFCEAEMDNLTRKLRKLERDYFEMREQVVTAKAGWCAVMRMVKDNGVERRLHRRELAYLSADDLRSMSDKALGALRLAVADNEHLRDVLRMSEDPKRPERKIQFFVAVYQHLRERIRQDIIRTDDPVEAIEQMEIELSRLTEELTSREQKLAISSRSVANIIRKTIQREQNRIRMLNQGLQNVSFGQVNSVRLNVNVRETHAMLLDVLSEQHEQHQDLFNSNRLTFSEALAKLYQRLNPQIDMGQRTPQTIGEELLDYRNYLEMEVEVNRGSDGWLRAESGALSTGEAIGTGMSILVMVVQSWEDESRRLRGKDISPCRLLFLDEAARLDARSIATLFELCERLQMQLIIAAPENISPEKGTTYKLVRKVFQNTEHVHVVGLRGFAPQLPETLPGSDEAPSQAS.

Residue 34-41 (GGNGAGKS) coordinates ATP. 3 coiled-coil regions span residues 326–418 (LEAD…QYNQ), 444–480 (LETFQAKELEATEKMLSLEQKMSMAQTAHSQFEQAYQ), and 509–603 (RHLA…RAPV). The tract at residues 666-783 (PGGSEDQRLN…EVPLFGRAAR (118 aa)) is flexible hinge. 3 coiled-coil regions span residues 835-923 (EAEI…AKLE), 977-1115 (EMLS…TAKA), and 1209-1266 (VEAI…QNVS).

It belongs to the SMC family. MukB subfamily. Homodimerization via its hinge domain. Binds to DNA via its C-terminal region. Interacts, and probably forms a ternary complex, with MukE and MukF via its C-terminal region. The complex formation is stimulated by calcium or magnesium. Interacts with tubulin-related protein FtsZ.

It is found in the cytoplasm. Its subcellular location is the nucleoid. In terms of biological role, plays a central role in chromosome condensation, segregation and cell cycle progression. Functions as a homodimer, which is essential for chromosome partition. Involved in negative DNA supercoiling in vivo, and by this means organize and compact chromosomes. May achieve or facilitate chromosome segregation by condensation DNA from both sides of a centrally located replisome during cell division. The sequence is that of Chromosome partition protein MukB from Escherichia coli O127:H6 (strain E2348/69 / EPEC).